Consider the following 428-residue polypeptide: Lipoamide acyltransferase component of branched-chain alpha-keto acid dehydrogenase complex (428 aa).

The 76-residue stretch at 3 to 78 folds into the Lipoyl-binding domain; it reads THVIKMPDIG…AVGGELIRLE (76 aa). Residue Lys-44 is modified to N6-lipoyllysine. The disordered stretch occupies residues 88–145; it reads SPAAATPAAPVAATPEKPKEAPVAAPKAAAEAPRALRDSEAPRQRRQPGERPLASPAV. A compositionally biased stretch (low complexity) spans 89–120; that stretch reads PAAATPAAPVAATPEKPKEAPVAAPKAAAEAP. Positions 121-136 are enriched in basic and acidic residues; it reads RALRDSEAPRQRRQPG. In terms of domain architecture, Peripheral subunit-binding (PSBD) spans 140–177; sequence LASPAVRQRARDLGIELQFVQGSGPAGRVLHEDLDAYL. Residues His-400 and Asp-404 contribute to the active site.

Belongs to the 2-oxoacid dehydrogenase family. Forms a 24-polypeptide structural core with octahedral symmetry. (R)-lipoate is required as a cofactor.

The enzyme catalyses N(6)-[(R)-dihydrolipoyl]-L-lysyl-[protein] + 2-methylpropanoyl-CoA = N(6)-[(R)-S(8)-2-methylpropanoyldihydrolipoyl]-L-lysyl-[protein] + CoA. In terms of biological role, the branched-chain alpha-keto dehydrogenase complex catalyzes the overall conversion of alpha-keto acids to acyl-CoA and CO(2). It contains multiple copies of three enzymatic components: branched-chain alpha-keto acid decarboxylase (E1), lipoamide acyltransferase (E2) and lipoamide dehydrogenase (E3). The sequence is that of Lipoamide acyltransferase component of branched-chain alpha-keto acid dehydrogenase complex (bkdB) from Pseudomonas aeruginosa (strain ATCC 15692 / DSM 22644 / CIP 104116 / JCM 14847 / LMG 12228 / 1C / PRS 101 / PAO1).